Reading from the N-terminus, the 407-residue chain is Argininosuccinate synthase (407 aa).

8 to 16 is a binding site for ATP; it reads AYSGGLDTT. 2 residues coordinate L-citrulline: Tyr-86 and Ser-91. Gly-116 lines the ATP pocket. Thr-118, Asn-122, and Asp-123 together coordinate L-aspartate. An L-citrulline-binding site is contributed by Asn-122. 5 residues coordinate L-citrulline: Arg-126, Ser-178, Ser-187, Glu-264, and Tyr-276.

Belongs to the argininosuccinate synthase family. Type 1 subfamily. In terms of assembly, homotetramer.

Its subcellular location is the cytoplasm. The catalysed reaction is L-citrulline + L-aspartate + ATP = 2-(N(omega)-L-arginino)succinate + AMP + diphosphate + H(+). It participates in amino-acid biosynthesis; L-arginine biosynthesis; L-arginine from L-ornithine and carbamoyl phosphate: step 2/3. This Lachnoclostridium phytofermentans (strain ATCC 700394 / DSM 18823 / ISDg) (Clostridium phytofermentans) protein is Argininosuccinate synthase.